Reading from the N-terminus, the 804-residue chain is Probable basic-leucine zipper transcription factor C (804 aa).

Disordered regions lie at residues 86–148 (FISP…NDIN) and 275–371 (YGNV…PKKR). Residues 90 to 145 (NNNNNNNNNNNNNNNNNNNNNNNNNNNNNNNNNNNNNNNNNNNNNNNNNNNNNNNN) show a composition bias toward low complexity. Positions 275–291 (YGNVSDNSSPETNFSYA) are enriched in polar residues. Residues 292 to 334 (SPSSPSSTQSQSSPYEQQPLSPNPTISLSSSISVTATTTTRPN) are compositionally biased toward low complexity. A compositionally biased stretch (basic and acidic residues) spans 335–356 (ATEKTKESSLKSKSKSNEKDKE). One can recognise a bZIP domain in the interval 415–478 (ALNYQFRKIK…DQYKLQEKQK (64 aa)). Residues 421–436 (RKIKNRESARRSRERK) are basic motif. The interval 443–450 (LEAKIAEI) is leucine-zipper. The disordered stretch occupies residues 670–693 (KNCNNNNENNNNNDNNKNSDDEKG). Low complexity predominate over residues 672–685 (CNNNNENNNNNDNN).

The protein belongs to the bZIP family.

It localises to the nucleus. In terms of biological role, probable transcriptional regulator. The polypeptide is Probable basic-leucine zipper transcription factor C (bzpC) (Dictyostelium discoideum (Social amoeba)).